Reading from the N-terminus, the 263-residue chain is Triosephosphate isomerase (263 aa).

10–12 (NWK) is a binding site for substrate. The active-site Electrophile is histidine 104. Glutamate 176 functions as the Proton acceptor in the catalytic mechanism. Residues glycine 182, serine 221, and 242 to 243 (GG) each bind substrate.

The protein belongs to the triosephosphate isomerase family. As to quaternary structure, homodimer.

The protein localises to the cytoplasm. The catalysed reaction is D-glyceraldehyde 3-phosphate = dihydroxyacetone phosphate. The protein operates within carbohydrate biosynthesis; gluconeogenesis. It participates in carbohydrate degradation; glycolysis; D-glyceraldehyde 3-phosphate from glycerone phosphate: step 1/1. Involved in the gluconeogenesis. Catalyzes stereospecifically the conversion of dihydroxyacetone phosphate (DHAP) to D-glyceraldehyde-3-phosphate (G3P). The sequence is that of Triosephosphate isomerase from Haemophilus influenzae (strain PittEE).